The chain runs to 195 residues: Replication restart protein PriC (195 aa).

It belongs to the PriC family. Monomer. Component of the replication restart primosome, which is composed of PriA, PriB, PriC, DnaB and DnaT; DnaG primase associates transiently with this complex. Interacts with the C-terminus of SSB; this interaction is required to load the main replicative helicase onto substrate replication forks. Interacts with helicase DnaB alone and in the DnaB-DnaC complex, probably 1:1 binding with DnaB.

Involved in the restart of stalled replication forks, which reloads the DnaB replicative helicase on sites other than the origin of replication. Recognizes abandoned replication forks and remodels DNA single-stranded binding protein (SSB) on ssDNA to uncover a loading site for DnaB. There are several restart pathways, the PriA-PriC pathway is a minor restart pathway. Part of the minor PriC-Rep pathway for restart of stalled replication forks, which has a different substrate specificity than PriA. Part of the major restart pathway with PriA, PriB, DnaB, DnaT and DnaG primase. priB and priC have redundant roles in the cell. This Haemophilus influenzae (strain ATCC 51907 / DSM 11121 / KW20 / Rd) protein is Replication restart protein PriC.